Reading from the N-terminus, the 554-residue chain is Glucose-6-phosphate isomerase (554 aa).

Catalysis depends on Glu359, which acts as the Proton donor. Residues His390 and Lys518 contribute to the active site.

Belongs to the GPI family.

It is found in the cytoplasm. The enzyme catalyses alpha-D-glucose 6-phosphate = beta-D-fructose 6-phosphate. Its pathway is carbohydrate biosynthesis; gluconeogenesis. It participates in carbohydrate degradation; glycolysis; D-glyceraldehyde 3-phosphate and glycerone phosphate from D-glucose: step 2/4. Functionally, catalyzes the reversible isomerization of glucose-6-phosphate to fructose-6-phosphate. The polypeptide is Glucose-6-phosphate isomerase (Pseudomonas fluorescens (strain Pf0-1)).